The following is a 341-amino-acid chain: S-adenosylmethionine:tRNA ribosyltransferase-isomerase (341 aa).

This sequence belongs to the QueA family. Monomer.

Its subcellular location is the cytoplasm. It catalyses the reaction 7-aminomethyl-7-carbaguanosine(34) in tRNA + S-adenosyl-L-methionine = epoxyqueuosine(34) in tRNA + adenine + L-methionine + 2 H(+). Its pathway is tRNA modification; tRNA-queuosine biosynthesis. Transfers and isomerizes the ribose moiety from AdoMet to the 7-aminomethyl group of 7-deazaguanine (preQ1-tRNA) to give epoxyqueuosine (oQ-tRNA). The polypeptide is S-adenosylmethionine:tRNA ribosyltransferase-isomerase (Clostridium botulinum (strain Langeland / NCTC 10281 / Type F)).